The primary structure comprises 690 residues: MRNLNLILFTALAAVTYANVQPHDISQNGAVKDGNHLRIDLNETSSVELMDKWLSQAFSGLMAAVASKKIAKMPAEHQNIVQQCSKDAKDVREHAKCLVKLLDAEKSGKLGRKQYQKVVKSPETIVLPENPKMLTKKDLEKAENAGAAENNENLEWIGSFGTARAKRSYKVVHRDSYALRSTDDVDGMTKLAKSLTNTVRAMKNKTERAEPWVEAVGRIKKLGEEAKREKKNREVMKKRLKQMIDNTPAEFVDPRKPVALKQAEMEDENNEIAKLMRKKEADEIRVPLKFLRKAVKTALMLGGQNVTDFDQKTLKMVSPRMMSIVPEQEDESLFNLLSPSLFSLHDEGEGIEKLTSLPHLLKKLDNHGQNAWMDFIVEAAGVSDEVTKTEKVFREKKEKELRGTDGVPLYFTKENATKILGNEEKSKIEVFEDLDKSYSEEQKKKLNDDGFAFLTEKQMERLYGKESPYKHTKALKKFKRLRDDPEKYIEKDIRALAEAEKFRVARRADIVSSPFILTPLTFASAPLSNTFIVLSPLVLSPITLSPAVLGPIILSPWVFVPLILSPRVLSPLIVNPLVFSPIILSPLVLHPLILVPGVFNPIILSPLVLSPLILSPQVFTPLILSPFALNPLILTPMVGSPLILSPFVLSPIILSPQALFAVVLSPYALSPLVESKLIAAEVVLSPSWLS.

The N-terminal stretch at 1–18 (MRNLNLILFTALAAVTYA) is a signal peptide. N-linked (GlcNAc...) asparagine glycans are attached at residues Asn42 and Asn204. Residues 219-285 (IKKLGEEAKR…MRKKEADEIR (67 aa)) adopt a coiled-coil conformation. Residues Asn305 and Asn415 are each glycosylated (N-linked (GlcNAc...) asparagine). 5 consecutive transmembrane segments (helical) span residues 514–534 (PFIL…FIVL), 544–564 (LSPA…PLIL), 579–599 (FSPI…PGVF), 618–638 (VFTP…TPMV), and 643–663 (ILSP…FAVV).

This sequence belongs to the mlt-10-like family. Expressed in the major body hypodermal syncytium (Hyp7), the dorsal and ventral ridges of the hypodermis, hypodermal cells in the head and tail, and the pharyngeal myoepithelium, but not the lateral seam cells.

It is found in the membrane. Its subcellular location is the secreted. In terms of biological role, required for the efficient removal of larval cuticles during the molting cycle as well as the synthesis of new cuticles. The polypeptide is Molting protein mlt-10 (Caenorhabditis elegans).